Consider the following 416-residue polypeptide: Serine hydroxymethyltransferase (416 aa).

(6S)-5,6,7,8-tetrahydrofolate-binding positions include Leu-121 and 125–127 (GHL). N6-(pyridoxal phosphate)lysine is present on Lys-230. 355 to 357 (SPF) serves as a coordination point for (6S)-5,6,7,8-tetrahydrofolate.

It belongs to the SHMT family. In terms of assembly, homodimer. The cofactor is pyridoxal 5'-phosphate.

Its subcellular location is the cytoplasm. The enzyme catalyses (6R)-5,10-methylene-5,6,7,8-tetrahydrofolate + glycine + H2O = (6S)-5,6,7,8-tetrahydrofolate + L-serine. It participates in one-carbon metabolism; tetrahydrofolate interconversion. It functions in the pathway amino-acid biosynthesis; glycine biosynthesis; glycine from L-serine: step 1/1. Its function is as follows. Catalyzes the reversible interconversion of serine and glycine with tetrahydrofolate (THF) serving as the one-carbon carrier. This reaction serves as the major source of one-carbon groups required for the biosynthesis of purines, thymidylate, methionine, and other important biomolecules. Also exhibits THF-independent aldolase activity toward beta-hydroxyamino acids, producing glycine and aldehydes, via a retro-aldol mechanism. This Streptococcus thermophilus (strain ATCC BAA-250 / LMG 18311) protein is Serine hydroxymethyltransferase.